We begin with the raw amino-acid sequence, 738 residues long: Protein Aster-B (738 aa).

A disordered region spans residues 1-81 (MKGFKLSCTA…SGGKNSKKSQ (81 aa)). Polar residues predominate over residues 8–19 (CTASNSNRSTPA). S28 and S30 each carry phosphoserine. Residues 41 to 51 (MVEKGSDHSSD) are compositionally biased toward basic and acidic residues. The segment covering 59–70 (QGVQRSCSSQSG) has biased composition (low complexity). Positions 96–163 (EDFRKLFKQL…KDICSMTKEK (68 aa)) constitute a GRAM domain. The tract at residues 254-299 (EENEVNDSSSKSSIETKPDASPQLPKKSITNSTLTSTGSSEAPVSF) is disordered. The span at 259–268 (NDSSSKSSIE) shows a compositional bias: polar residues. Position 274 is a phosphoserine (S274). Polar residues predominate over residues 281 to 295 (SITNSTLTSTGSSEA). Residues 372 to 543 (SGRQYVNEVF…ELTKTESTYL (172 aa)) enclose the VASt domain. Y389 is subject to Phosphotyrosine. Phosphoserine occurs at positions 550 and 581. T584, T585, and T587 each carry phosphothreonine. The helical transmembrane segment at 623–643 (LLLVISCVICFSLVLLVVLNM) threads the bilayer.

Highly expressed in the adrenal gland (at protein level) and brain. Also found in the kidney, testis and macrophages.

The protein localises to the endoplasmic reticulum membrane. Its subcellular location is the cell membrane. Its function is as follows. Cholesterol transporter that mediates non-vesicular transport of cholesterol from the plasma membrane (PM) to the endoplasmic reticulum (ER). Contains unique domains for binding cholesterol and the PM, thereby serving as a molecular bridge for the transfer of cholesterol from the PM to the ER. Plays a crucial role in cholesterol homeostasis in the adrenal gland and has the unique ability to localize to the PM based on the level of membrane cholesterol. In lipid-poor conditions localizes to the ER membrane and in response to excess cholesterol in the PM is recruited to the endoplasmic reticulum-plasma membrane contact sites (EPCS) which is mediated by the GRAM domain. At the EPCS, the sterol-binding VASt/ASTER domain binds to the cholesterol in the PM and facilitates its transfer from the PM to ER. In Mus musculus (Mouse), this protein is Protein Aster-B (Gramd1b).